The following is a 716-amino-acid chain: Mitochondrial Rho GTPase 1 (716 aa).

The Cytoplasmic segment spans residues 1–692 (MSPDAIRVVV…VSVDQDDIKH (692 aa)). In terms of domain architecture, Miro 1 spans 3-224 (PDAIRVVVCG…FYLCQRAVTH (222 aa)). Residues 58 to 99 (NDQDHHHHHQSSPSTMKNKRKHNNKRERERERESSINNVQPN) form a disordered region. GTP contacts are provided by residues 84–91 (ERERERES), 113–115 (DTS), and 167–170 (NKSD). In terms of domain architecture, EF-hand 1 spans 240–275 (GAIKPLKRIFWLSDTDQDGYLNFEELSELHKKCFGI). Ca(2+)-binding residues include aspartate 253, aspartate 255, aspartate 257, tyrosine 259, and glutamate 264. The disordered stretch occupies residues 303–327 (TQTPPQQQHLATSAGTPNGTTTTTS). An EF-hand 2 domain is found at 388-423 (TGYKFFVDLFIKFDKDNDGGLNEDELNTLFRSTPGI). The Ca(2+) site is built by aspartate 401, aspartate 403, aspartate 405, and glutamate 412. The region spanning 505 to 671 (RNVFNCFIVG…FIQLVDAAKT (167 aa)) is the Miro 2 domain. GTP contacts are provided by residues 514–521 (GAPKAGKS), 550–554 (ELRGG), and 620–623 (LKAD). A helical; Anchor for type IV membrane protein membrane pass occupies residues 693-713 (IIMTGAAIAVVGLVSIWVLNS). Topologically, residues 714–716 (LRR) are mitochondrial intermembrane.

Belongs to the mitochondrial Rho GTPase family.

It is found in the mitochondrion outer membrane. Functionally, mitochondrial GTPase involved in mitochondrial trafficking. Probably involved in control of anterograde transport of mitochondria and their subcellular distribution. The sequence is that of Mitochondrial Rho GTPase 1 (GEM1) from Candida albicans (strain SC5314 / ATCC MYA-2876) (Yeast).